Consider the following 127-residue polypeptide: MGQFSILGFIALGGAIGACSRYLVSEFCVLLFGRGFPYGTLTVNVVGSFIMGLLIAAFENEILATEPWRQVIGLGFLGALTTFSTFSMDNVLLMQQGAFFKMGLNILLNVVLSISAAWIGFQLLMRS.

4 helical membrane-spanning segments follow: residues 4–24 (FSIL…RYLV), 38–58 (YGTL…IAAF), 71–91 (VIGL…MDNV), and 104–124 (LNIL…FQLL). 2 residues coordinate Na(+): Gly78 and Thr81.

This sequence belongs to the fluoride channel Fluc/FEX (TC 1.A.43) family.

It is found in the cell inner membrane. The enzyme catalyses fluoride(in) = fluoride(out). With respect to regulation, na(+) is not transported, but it plays an essential structural role and its presence is essential for fluoride channel function. In terms of biological role, fluoride-specific ion channel. Important for reducing fluoride concentration in the cell, thus reducing its toxicity. The sequence is that of Fluoride-specific ion channel FluC from Vibrio parahaemolyticus serotype O3:K6 (strain RIMD 2210633).